Consider the following 391-residue polypeptide: Homoserine O-acetyltransferase (391 aa).

Residues 50–360 enclose the AB hydrolase-1 domain; sequence NAILICHALT…DKGHDAFLLD (311 aa). Catalysis depends on Ser-155, which acts as the Nucleophile. Arg-225 lines the substrate pocket. Active-site residues include Asp-321 and His-354. Residue Asp-355 participates in substrate binding.

It belongs to the AB hydrolase superfamily. MetX family. In terms of assembly, homodimer.

It localises to the cytoplasm. It carries out the reaction L-homoserine + acetyl-CoA = O-acetyl-L-homoserine + CoA. Its pathway is amino-acid biosynthesis; L-methionine biosynthesis via de novo pathway; O-acetyl-L-homoserine from L-homoserine: step 1/1. Functionally, transfers an acetyl group from acetyl-CoA to L-homoserine, forming acetyl-L-homoserine. This chain is Homoserine O-acetyltransferase, found in Rhodospirillum rubrum (strain ATCC 11170 / ATH 1.1.1 / DSM 467 / LMG 4362 / NCIMB 8255 / S1).